We begin with the raw amino-acid sequence, 495 residues long: REST corepressor 3 (495 aa).

The ELM2 domain maps to 1–83 (MRVGAEYQAR…KSLADLPNFT (83 aa)). A Glycyl lysine isopeptide (Lys-Gly) (interchain with G-Cter in SUMO2) cross-link involves residue K20. The SANT 1 domain occupies 84–135 (PFPDEWTVEDKVLFEQAFSFHGKSFHRIQQMLPDKTIASLVKYYYSWKKTRS). The segment at 147-219 (LANRHNQGDS…SQRSKCRPPK (73 aa)) is disordered. 2 positions are modified to phosphoserine: S156 and S171. Over residues 162–184 (ETHPMDGNDSDYDPKKEAKKEGN) the composition is skewed to basic and acidic residues. A Glycyl lysine isopeptide (Lys-Gly) (interchain with G-Cter in SUMO2) cross-link involves residue K193. Residues 205–217 (QHRHHSQRSKCRP) show a composition bias toward basic residues. The stretch at 237 to 273 (AANTILRQLDMELISLKRQVQNAKQVNSALKQKMEGG) forms a coiled coil. Residue K285 forms a Glycyl lysine isopeptide (Lys-Gly) (interchain with G-Cter in SUMO2) linkage. Positions 285-336 (KINARWTTEEQLLAVQGVRKYGKDFQAIADVIGNKTVGQVKNFFVNYRRRFN) constitute an SANT 2 domain. Residues 346–495 (AEQGTQASNG…IQTDSQSSLH (150 aa)) are disordered. Residues 348 to 357 (QGTQASNGDA) are compositionally biased toward polar residues. T376 is subject to Phosphothreonine. A compositionally biased stretch (pro residues) spans 393–405 (PSPPAPSSTPTPT). Positions 419-428 (RPTLPAAPAL) are enriched in low complexity. Asymmetric dimethylarginine occurs at positions 445 and 457. The segment covering 475 to 495 (VGGQQPPSLIGIQTDSQSSLH) has biased composition (polar residues).

The protein belongs to the CoREST family.

The protein resides in the nucleus. Its function is as follows. May act as a component of a corepressor complex that represses transcription. In Homo sapiens (Human), this protein is REST corepressor 3 (RCOR3).